The sequence spans 200 residues: Peroxiredoxin (200 aa).

In terms of domain architecture, Thioredoxin spans 6 to 165; it reads AQIGKPAPEF…TLRLVQAFQH (160 aa). Cysteine 52 serves as the catalytic Cysteine sulfenic acid (-SOH) intermediate.

The protein belongs to the peroxiredoxin family. AhpC/Prx1 subfamily. Homodimer; disulfide-linked, upon oxidation.

It carries out the reaction a hydroperoxide + [thioredoxin]-dithiol = an alcohol + [thioredoxin]-disulfide + H2O. Functionally, thiol-specific peroxidase that catalyzes the reduction of hydrogen peroxide and organic hydroperoxides to water and alcohols, respectively. Plays a role in cell protection against oxidative stress by detoxifying peroxides and as sensor of hydrogen peroxide-mediated signaling events. In Cynops pyrrhogaster (Japanese fire-bellied newt), this protein is Peroxiredoxin.